The sequence spans 273 residues: MLIWWRGKFRRADEISLDFSLFEKSLQGAVYETLRTYSRAPFAAYKHYTRLKRSADFFNLPLSLSFDEFTKVLKAGADEFKQEVRIKVYLFPDSGEVLFVFSPLNIPDLETGVEVKISNVRRIPDLSTPPALKITGRTDIVLARREIVDCYDVILLGLNGQVCEGSFSNVFLVKEGKLITPSLDSGILDGITRENVIKLAKSLEIPVEERVVWVWELFEADEMFLTHTSAGVVPVRRLNEHSFFEEEPGPVTATLMENFEPFVLNLEENWVGI.

Position 133 is an N6-(pyridoxal phosphate)lysine (lysine 133).

It belongs to the class-IV pyridoxal-phosphate-dependent aminotransferase family. The cofactor is pyridoxal 5'-phosphate.

The catalysed reaction is L-leucine + 2-oxoglutarate = 4-methyl-2-oxopentanoate + L-glutamate. It catalyses the reaction L-isoleucine + 2-oxoglutarate = (S)-3-methyl-2-oxopentanoate + L-glutamate. The enzyme catalyses L-valine + 2-oxoglutarate = 3-methyl-2-oxobutanoate + L-glutamate. It functions in the pathway amino-acid biosynthesis; L-isoleucine biosynthesis; L-isoleucine from 2-oxobutanoate: step 4/4. Its pathway is amino-acid biosynthesis; L-leucine biosynthesis; L-leucine from 3-methyl-2-oxobutanoate: step 4/4. It participates in amino-acid biosynthesis; L-valine biosynthesis; L-valine from pyruvate: step 4/4. Acts on leucine, isoleucine and valine. The protein is Probable branched-chain-amino-acid aminotransferase (ilvE) of Thermotoga maritima (strain ATCC 43589 / DSM 3109 / JCM 10099 / NBRC 100826 / MSB8).